Reading from the N-terminus, the 343-residue chain is 2,3,4,5-tetrahydropyridine-2,6-dicarboxylate N-succinyltransferase (343 aa).

Glu-204 serves as a coordination point for Mg(2+). The active-site Acyl-anhydride intermediate is Glu-220. Succinyl-CoA contacts are provided by residues Arg-222, Gly-237, Ser-240, Ala-263, 278-279 (ES), Gly-286, Lys-303, and 316-319 (RRNS).

This sequence belongs to the type 2 tetrahydrodipicolinate N-succinyltransferase family. Homotrimer.

Its subcellular location is the cytoplasm. It catalyses the reaction (S)-2,3,4,5-tetrahydrodipicolinate + succinyl-CoA + H2O = (S)-2-succinylamino-6-oxoheptanedioate + CoA. It functions in the pathway amino-acid biosynthesis; L-lysine biosynthesis via DAP pathway; LL-2,6-diaminopimelate from (S)-tetrahydrodipicolinate (succinylase route): step 1/3. Catalyzes the conversion of the cyclic tetrahydrodipicolinate (THDP) into the acyclic N-succinyl-L-2-amino-6-oxopimelate using succinyl-CoA. In Vibrio cholerae serotype O1 (strain ATCC 39315 / El Tor Inaba N16961), this protein is 2,3,4,5-tetrahydropyridine-2,6-dicarboxylate N-succinyltransferase.